Reading from the N-terminus, the 360-residue chain is Meiosis-inducing protein 1 (360 aa).

A disordered region spans residues 102–135; that stretch reads SKETKTTKDCTMATGPERGKKSSESTRSSSLSSL. Positions 126-135 are enriched in low complexity; it reads STRSSSLSSL.

As to quaternary structure, interacts with UME6.

The protein localises to the nucleus. Functionally, transcription factor required for sporulation and for early sporulation-specific genes expression. Positive regulator of SME1/IME2 expression. Directly activates expression of SLZ1 during meiosis. The chain is Meiosis-inducing protein 1 (IME1) from Saccharomyces cerevisiae (strain ATCC 204508 / S288c) (Baker's yeast).